The sequence spans 520 residues: Sodium-dependent dicarboxylate transporter SdcS (520 aa).

Helical transmembrane passes span 30–50, 55–75, 77–97, 104–124, 160–180, 207–227, 242–262, 298–318, 323–343, 362–382, 399–419, 428–448, 452–472, and 491–511; these read AGQL…LLFF, LPWK…WWIT, AIPI…GHIL, SEYG…AIAM, SMFV…LAII, IGYA…PLII, FAKW…ITWL, KVVQ…EFLL, VTSS…LFVI, ELPW…KGIS, GVSP…LTEV, MILP…LLLM, AMAA…AIIF, and LISA…VLGI.

This sequence belongs to the SLC13A/DASS transporter (TC 2.A.47) family. NADC subfamily.

Its subcellular location is the cell membrane. In terms of biological role, mediates the transport of the dicarboxylates fumarate, malate, and succinate across the cytoplasmic membrane via a Na(+)-electrochemical gradient. This chain is Sodium-dependent dicarboxylate transporter SdcS (sdcS), found in Staphylococcus aureus (strain MSSA476).